Here is a 429-residue protein sequence, read N- to C-terminus: Adenylosuccinate synthetase (429 aa).

GTP contacts are provided by residues 12–18 (GDEGKGK) and 40–42 (GHT). Asp13 functions as the Proton acceptor in the catalytic mechanism. 2 residues coordinate Mg(2+): Asp13 and Gly40. IMP contacts are provided by residues 13-16 (DEGK), 38-41 (NAGH), Thr128, Arg142, Gln223, Thr238, and Arg302. His41 functions as the Proton donor in the catalytic mechanism. 298-304 (VNTGRKR) serves as a coordination point for substrate. GTP-binding positions include Arg304, 330 to 332 (KLD), and 412 to 414 (GVG).

The protein belongs to the adenylosuccinate synthetase family. Homodimer. Requires Mg(2+) as cofactor.

It is found in the cytoplasm. The catalysed reaction is IMP + L-aspartate + GTP = N(6)-(1,2-dicarboxyethyl)-AMP + GDP + phosphate + 2 H(+). The protein operates within purine metabolism; AMP biosynthesis via de novo pathway; AMP from IMP: step 1/2. Functionally, plays an important role in the de novo pathway of purine nucleotide biosynthesis. Catalyzes the first committed step in the biosynthesis of AMP from IMP. In Corynebacterium glutamicum (strain R), this protein is Adenylosuccinate synthetase.